The following is a 287-amino-acid chain: Polyamine aminopropyltransferase (287 aa).

In terms of domain architecture, PABS spans 9 to 242 (GSWLDEYQND…GIWSWTFASI (234 aa)). An S-methyl-5'-thioadenosine-binding site is contributed by Gln36. The spermidine site is built by His67 and Asp91. Residues Glu111 and 143–144 (NG) contribute to the S-methyl-5'-thioadenosine site. Residue Asp162 is the Proton acceptor of the active site. Pro169 provides a ligand contact to S-methyl-5'-thioadenosine.

It belongs to the spermidine/spermine synthase family. As to quaternary structure, homodimer or homotetramer.

It is found in the cytoplasm. It carries out the reaction S-adenosyl 3-(methylsulfanyl)propylamine + putrescine = S-methyl-5'-thioadenosine + spermidine + H(+). The protein operates within amine and polyamine biosynthesis; spermidine biosynthesis; spermidine from putrescine: step 1/1. Functionally, catalyzes the irreversible transfer of a propylamine group from the amino donor S-adenosylmethioninamine (decarboxy-AdoMet) to putrescine (1,4-diaminobutane) to yield spermidine. This Prochlorococcus marinus (strain SARG / CCMP1375 / SS120) protein is Polyamine aminopropyltransferase.